Here is a 266-residue protein sequence, read N- to C-terminus: 3-deoxy-manno-octulosonate cytidylyltransferase (266 aa).

The protein belongs to the KdsB family.

The protein resides in the cytoplasm. It catalyses the reaction 3-deoxy-alpha-D-manno-oct-2-ulosonate + CTP = CMP-3-deoxy-beta-D-manno-octulosonate + diphosphate. It participates in nucleotide-sugar biosynthesis; CMP-3-deoxy-D-manno-octulosonate biosynthesis; CMP-3-deoxy-D-manno-octulosonate from 3-deoxy-D-manno-octulosonate and CTP: step 1/1. Its pathway is bacterial outer membrane biogenesis; lipopolysaccharide biosynthesis. Functionally, activates KDO (a required 8-carbon sugar) for incorporation into bacterial lipopolysaccharide in Gram-negative bacteria. The chain is 3-deoxy-manno-octulosonate cytidylyltransferase from Paraburkholderia xenovorans (strain LB400).